The primary structure comprises 835 residues: Leucine--tRNA ligase (835 aa).

Positions 44-54 match the 'HIGH' region motif; it reads PYPSGNIHMGH. The short motif at 587-591 is the 'KMSKS' region element; it reads KMSKS. K590 lines the ATP pocket.

The protein belongs to the class-I aminoacyl-tRNA synthetase family.

The protein localises to the cytoplasm. The enzyme catalyses tRNA(Leu) + L-leucine + ATP = L-leucyl-tRNA(Leu) + AMP + diphosphate. This is Leucine--tRNA ligase from Lawsonia intracellularis (strain PHE/MN1-00).